A 265-amino-acid chain; its full sequence is Zearalenone hydrolase (265 aa).

Residues Gly35, Ser105, and Ser106 each coordinate zearalenone. Ser105 is a catalytic residue. Glu129 is a catalytic residue. Trp185, Tyr189, and His243 together coordinate zearalenone. His243 is an active-site residue.

This sequence belongs to the AB hydrolase superfamily. Hydrolase RutD family. As to quaternary structure, homodimer.

It carries out the reaction zearalenone + H2O = hydrolyzed zearalenone + H(+). Lactonohydrolase that specifically hydrolyzes zearalenone (ZEN), an oestrogenic mycotoxin produced by numerous Fusarium specie, into a non-toxic alkylresorcinol product. The polypeptide is Zearalenone hydrolase (Cladophialophora bantiana (strain ATCC 10958 / CDC1940 / 8579 / CBS 173.52) (Xylohypha bantiana)).